A 321-amino-acid polypeptide reads, in one-letter code: Ribose-phosphate pyrophosphokinase (321 aa).

ATP-binding positions include 44–46 (DGE) and 103–104 (RQ). Mg(2+)-binding residues include His137 and Asp179. The active site involves Lys202. D-ribose 5-phosphate is bound by residues Arg204, Asp228, and 232 to 236 (DTAGT).

Belongs to the ribose-phosphate pyrophosphokinase family. Class I subfamily. As to quaternary structure, homohexamer. The cofactor is Mg(2+).

Its subcellular location is the cytoplasm. The enzyme catalyses D-ribose 5-phosphate + ATP = 5-phospho-alpha-D-ribose 1-diphosphate + AMP + H(+). The protein operates within metabolic intermediate biosynthesis; 5-phospho-alpha-D-ribose 1-diphosphate biosynthesis; 5-phospho-alpha-D-ribose 1-diphosphate from D-ribose 5-phosphate (route I): step 1/1. In terms of biological role, involved in the biosynthesis of the central metabolite phospho-alpha-D-ribosyl-1-pyrophosphate (PRPP) via the transfer of pyrophosphoryl group from ATP to 1-hydroxyl of ribose-5-phosphate (Rib-5-P). In Staphylococcus saprophyticus subsp. saprophyticus (strain ATCC 15305 / DSM 20229 / NCIMB 8711 / NCTC 7292 / S-41), this protein is Ribose-phosphate pyrophosphokinase.